The primary structure comprises 252 residues: Pre-rRNA-processing protein pno1 (252 aa).

Residues 1–57 (MPAPTALLRKSDEPLSAEEPSLTFSSDAQASGQGEAPSPIPTESAQHSDMRIDEESR) are disordered. The span at 22 to 32 (LTFSSDAQASG) shows a compositional bias: polar residues. Residues 46-57 (QHSDMRIDEESR) are compositionally biased toward basic and acidic residues. The KH domain occupies 173–225 (GEHLSRAIGRIAGKDGKTKFAIENASRTRVVLQGTKVTILGRFRDLGIAQEAI).

This sequence belongs to the PNO1 family. In terms of assembly, component of the small ribosomal subunit, ribosomal RNA processing complex (SSU RRP complex).

The protein resides in the cytoplasm. The protein localises to the nucleus. Its subcellular location is the nucleolus. Required for small ribosomal subunit (SSU) synthesis. Has a role in the processing of early nucleolar and late cytoplasmic pre-RNA species. The chain is Pre-rRNA-processing protein pno1 (pno1) from Aspergillus fumigatus (strain ATCC MYA-4609 / CBS 101355 / FGSC A1100 / Af293) (Neosartorya fumigata).